Here is a 153-residue protein sequence, read N- to C-terminus: Actin-related protein 2/3 complex subunit 5-like protein (153 aa).

At Ser64 the chain carries Phosphoserine.

Belongs to the ARPC5 family. In terms of assembly, may be a component of the Arp2/3 complex in which it may replace ARPC5.

It is found in the cytoplasm. The protein resides in the cytoskeleton. May function as component of the Arp2/3 complex which is involved in regulation of actin polymerization and together with an activating nucleation-promoting factor (NPF) mediates the formation of branched actin networks. This chain is Actin-related protein 2/3 complex subunit 5-like protein (Arpc5l), found in Rattus norvegicus (Rat).